Consider the following 1178-residue polypeptide: DNA-directed RNA polymerase subunit beta' (1178 aa).

The Zn(2+) site is built by C60, C62, C75, and C78. Residues D450, D452, and D454 each coordinate Mg(2+). Zn(2+) is bound by residues C795, C869, C876, and C879.

This sequence belongs to the RNA polymerase beta' chain family. As to quaternary structure, the RNAP catalytic core consists of 2 alpha, 1 beta, 1 beta' and 1 omega subunit. When a sigma factor is associated with the core the holoenzyme is formed, which can initiate transcription. The cofactor is Mg(2+). Zn(2+) serves as cofactor.

The enzyme catalyses RNA(n) + a ribonucleoside 5'-triphosphate = RNA(n+1) + diphosphate. Its function is as follows. DNA-dependent RNA polymerase catalyzes the transcription of DNA into RNA using the four ribonucleoside triphosphates as substrates. In Clostridium beijerinckii (strain ATCC 51743 / NCIMB 8052) (Clostridium acetobutylicum), this protein is DNA-directed RNA polymerase subunit beta'.